A 687-amino-acid chain; its full sequence is Dentin sialophosphoprotein (687 aa).

The N-terminal stretch at 1-17 is a signal peptide; sequence MKTKIIIYICIWATAWA. A disordered region spans residues 54-113; that stretch reads NNATNDDSPKGSELGRQVHSNGGYERDRNGSESIAVGGKSSPTQPILANAQGNSAKERED. Asparagine 55 is a glycosylation site (N-linked (GlcNAc...) asparagine). A Phosphothreonine; by CK2 modification is found at threonine 57. An N-linked (GlcNAc...) asparagine glycan is attached at asparagine 82. Polar residues predominate over residues 93–107; sequence SSPTQPILANAQGNS. N-linked (GlcNAc...) asparagine glycosylation is present at asparagine 128. Over residues 146 to 160 the composition is skewed to basic and acidic residues; sequence EAKESKVHGQPHQDT. The segment at 146–687 is disordered; that stretch reads EAKESKVHGQ…SDSNHSTSDD (542 aa). Over residues 161 to 194 the composition is skewed to polar residues; sequence KTGLASDTSQNGDATLVQENEPQVAGSKNSTNHE. N-linked (GlcNAc...) asparagine glycosylation occurs at asparagine 189. A Phosphoserine; by CK2 modification is found at serine 226. Serine 253 is subject to Phosphoserine; by CK1. Residues 262-275 are compositionally biased toward basic and acidic residues; the sequence is GDGRESHDGTEGHE. The segment covering 276 to 292 has biased composition (polar residues); that stretch reads GQSSGGNNDNRGQGSVS. Serine 278 is modified (phosphoserine; by CK1). A Phosphoserine; by CK2 modification is found at serine 292. Serine 298 bears the Phosphoserine; by CK1 mark. A glycan (N-linked (GlcNAc...) asparagine) is linked at asparagine 312. Serine 315 carries the post-translational modification Phosphoserine; by CK2. A phosphothreonine; by CK2 mark is found at threonine 319 and threonine 329. Phosphoserine; by CK2 is present on residues serine 337 and serine 345. A compositionally biased stretch (polar residues) spans 352–375; the sequence is SGQSQNQGLETEGSSTGNKSSITK. The residue at position 366 (serine 366) is a Phosphoserine; by CK1. Asparagine 369 carries an N-linked (GlcNAc...) asparagine glycan. Residues 386 to 417 show a composition bias toward basic and acidic residues; the sequence is SNGHHGMELDKRNSPKQGESDKPQGAAEKSDT. A compositionally biased stretch (polar residues) spans 418–432; that stretch reads HNNMGHSRIGSSSNS. Positions 447 to 460 are enriched in low complexity; sequence GDDPNSSDESNGSD. The segment covering 500–521 has biased composition (acidic residues); that stretch reads DDSSDDTSDTDDSDSNGDDDSE. The segment covering 522–545 has biased composition (basic and acidic residues); the sequence is SKDKDESDNSNHDNDSDSESKSDS. Low complexity predominate over residues 555–598; that stretch reads SSDSSDSSDSSETSDSSDSSDTSDSSDSSDSSDSSNSSDTSDSS. Over residues 599–617 the composition is skewed to acidic residues; the sequence is DSSDGDSSDGDSSDSDSSD. Low complexity predominate over residues 618–639; sequence SDSSNSSDSDSSDSSDSSSSDS. Over residues 667–677 the composition is skewed to acidic residues; it reads SDSDSDSDSEG. The span at 678–687 shows a compositional bias: low complexity; sequence SDSNHSTSDD.

Interacts with FBLN7. DSP is glycosylated. As to expression, specifically expressed in teeth, mainly in odontoblasts and transiently in pre-ameloblasts.

The protein resides in the secreted. It localises to the extracellular space. Its subcellular location is the extracellular matrix. Functionally, DSP may be an important factor in dentinogenesis. DPP may bind high amount of calcium and facilitate initial mineralization of dentin matrix collagen as well as regulate the size and shape of the crystals. The sequence is that of Dentin sialophosphoprotein (Dspp) from Rattus norvegicus (Rat).